We begin with the raw amino-acid sequence, 344 residues long: Anthranilate phosphoribosyltransferase (344 aa).

5-phospho-alpha-D-ribose 1-diphosphate-binding positions include glycine 80, 83-84, threonine 88, 90-93, 108-116, and serine 120; these read GD, NIST, and KHGNRSVSS. Residue glycine 80 coordinates anthranilate. Serine 92 contributes to the Mg(2+) binding site. Residue asparagine 111 coordinates anthranilate. Arginine 166 contacts anthranilate. Residues aspartate 225 and glutamate 226 each contribute to the Mg(2+) site.

Belongs to the anthranilate phosphoribosyltransferase family. In terms of assembly, homodimer. It depends on Mg(2+) as a cofactor.

The enzyme catalyses N-(5-phospho-beta-D-ribosyl)anthranilate + diphosphate = 5-phospho-alpha-D-ribose 1-diphosphate + anthranilate. It participates in amino-acid biosynthesis; L-tryptophan biosynthesis; L-tryptophan from chorismate: step 2/5. Catalyzes the transfer of the phosphoribosyl group of 5-phosphorylribose-1-pyrophosphate (PRPP) to anthranilate to yield N-(5'-phosphoribosyl)-anthranilate (PRA). The polypeptide is Anthranilate phosphoribosyltransferase (Petrotoga mobilis (strain DSM 10674 / SJ95)).